We begin with the raw amino-acid sequence, 635 residues long: Threonine--tRNA ligase (635 aa).

A TGS domain is found at 1 to 61; that stretch reads MIKITLKDGS…ENDCTLNLLT (61 aa). The catalytic stretch occupies residues 242 to 532; that stretch reads DHRKLGRELD…LTEHYAGAFP (291 aa). Zn(2+) contacts are provided by C333, H384, and H509.

Belongs to the class-II aminoacyl-tRNA synthetase family. As to quaternary structure, homodimer. The cofactor is Zn(2+).

It localises to the cytoplasm. It catalyses the reaction tRNA(Thr) + L-threonine + ATP = L-threonyl-tRNA(Thr) + AMP + diphosphate + H(+). In terms of biological role, catalyzes the attachment of threonine to tRNA(Thr) in a two-step reaction: L-threonine is first activated by ATP to form Thr-AMP and then transferred to the acceptor end of tRNA(Thr). Also edits incorrectly charged L-seryl-tRNA(Thr). This is Threonine--tRNA ligase from Acetivibrio thermocellus (strain ATCC 27405 / DSM 1237 / JCM 9322 / NBRC 103400 / NCIMB 10682 / NRRL B-4536 / VPI 7372) (Clostridium thermocellum).